The sequence spans 193 residues: Imidazoleglycerol-phosphate dehydratase (193 aa).

Belongs to the imidazoleglycerol-phosphate dehydratase family.

Its subcellular location is the cytoplasm. The enzyme catalyses D-erythro-1-(imidazol-4-yl)glycerol 3-phosphate = 3-(imidazol-4-yl)-2-oxopropyl phosphate + H2O. Its pathway is amino-acid biosynthesis; L-histidine biosynthesis; L-histidine from 5-phospho-alpha-D-ribose 1-diphosphate: step 6/9. The protein is Imidazoleglycerol-phosphate dehydratase of Saccharolobus islandicus (strain Y.G.57.14 / Yellowstone #1) (Sulfolobus islandicus).